We begin with the raw amino-acid sequence, 357 residues long: MAKDYYAILGVDRNASQDDIKKAFRELAKKYHPDANPGNKEAEEKFKEIAEAYEVLSDPQKRKQYDETGTTDFNAGSGFNWQDFTHFDDINDIFNQFFGGNFGDTFFGGYTNQPDLDIYLRVNISLEDAYYGASKNVKYRRNAMCEHCSGTGAENKVLITCPTCHGSGQERITRGQGFFRMVTVTECRTCHGRGKIPQKPCTVCHGTGTVSKNEDISVNIPKGADTNLKLRLKNMGNSYGGVTGDLYIVLIVNNPPGIRRSGQDIYVEHTIDFPEAALGGEEEIKLFRESYNLKIPAGTQPGEILKIKGAGMPRINGHGSGDLNVIIKIEVPKHLTSRQKELLEEFRNEKKKSWFHF.

A J domain is found at 4 to 69; the sequence is DYYAILGVDR…QKRKQYDETG (66 aa). The CR-type zinc-finger motif lies at 132–213; that stretch reads GASKNVKYRR…CHGTGTVSKN (82 aa). Residues C145, C148, C161, C164, C187, C190, C201, and C204 each coordinate Zn(2+). 4 CXXCXGXG motif repeats span residues 145-152, 161-168, 187-194, and 201-208; these read CEHCSGTG, CPTCHGSG, CRTCHGRG, and CTVCHGTG.

This sequence belongs to the DnaJ family. As to quaternary structure, homodimer. The cofactor is Zn(2+).

Its subcellular location is the cytoplasm. Its function is as follows. Participates actively in the response to hyperosmotic and heat shock by preventing the aggregation of stress-denatured proteins and by disaggregating proteins, also in an autonomous, DnaK-independent fashion. Unfolded proteins bind initially to DnaJ; upon interaction with the DnaJ-bound protein, DnaK hydrolyzes its bound ATP, resulting in the formation of a stable complex. GrpE releases ADP from DnaK; ATP binding to DnaK triggers the release of the substrate protein, thus completing the reaction cycle. Several rounds of ATP-dependent interactions between DnaJ, DnaK and GrpE are required for fully efficient folding. Also involved, together with DnaK and GrpE, in the DNA replication of plasmids through activation of initiation proteins. The protein is Chaperone protein DnaJ of Picrophilus torridus (strain ATCC 700027 / DSM 9790 / JCM 10055 / NBRC 100828 / KAW 2/3).